A 142-amino-acid chain; its full sequence is Putative pre-16S rRNA nuclease (142 aa).

The protein belongs to the YqgF nuclease family.

The protein localises to the cytoplasm. In terms of biological role, could be a nuclease involved in processing of the 5'-end of pre-16S rRNA. The protein is Putative pre-16S rRNA nuclease of Ruminiclostridium cellulolyticum (strain ATCC 35319 / DSM 5812 / JCM 6584 / H10) (Clostridium cellulolyticum).